Here is a 199-residue protein sequence, read N- to C-terminus: Holliday junction branch migration complex subunit RuvA (199 aa).

Residues 1–62 form a domain I region; sequence MIAYIKGLLA…EDGIQFFGFA (62 aa). Residues 63–141 form a domain II region; sequence KEDEKECFLL…GMAAVEHSTL (79 aa). The flexible linker stretch occupies residues 142 to 152; the sequence is QQSVITTGSGD. Positions 152-199 are domain III; the sequence is DEAVEALLALGYSQGEARDAVKKAQKSAPEEDLSALIKIALKELAPSR.

Belongs to the RuvA family. In terms of assembly, homotetramer. Forms an RuvA(8)-RuvB(12)-Holliday junction (HJ) complex. HJ DNA is sandwiched between 2 RuvA tetramers; dsDNA enters through RuvA and exits via RuvB. An RuvB hexamer assembles on each DNA strand where it exits the tetramer. Each RuvB hexamer is contacted by two RuvA subunits (via domain III) on 2 adjacent RuvB subunits; this complex drives branch migration. In the full resolvosome a probable DNA-RuvA(4)-RuvB(12)-RuvC(2) complex forms which resolves the HJ.

The protein resides in the cytoplasm. Functionally, the RuvA-RuvB-RuvC complex processes Holliday junction (HJ) DNA during genetic recombination and DNA repair, while the RuvA-RuvB complex plays an important role in the rescue of blocked DNA replication forks via replication fork reversal (RFR). RuvA specifically binds to HJ cruciform DNA, conferring on it an open structure. The RuvB hexamer acts as an ATP-dependent pump, pulling dsDNA into and through the RuvAB complex. HJ branch migration allows RuvC to scan DNA until it finds its consensus sequence, where it cleaves and resolves the cruciform DNA. This Desulforamulus reducens (strain ATCC BAA-1160 / DSM 100696 / MI-1) (Desulfotomaculum reducens) protein is Holliday junction branch migration complex subunit RuvA.